Reading from the N-terminus, the 379-residue chain is Homoserine O-succinyltransferase (379 aa).

Positions 51–360 constitute an AB hydrolase-1 domain; it reads NAVLICHALS…DSPYGHDAFL (310 aa). Residue Ser157 is the Nucleophile of the active site. Arg227 is a substrate binding site. Catalysis depends on residues Asp323 and His356. Position 357 (Asp357) interacts with substrate.

It belongs to the AB hydrolase superfamily. MetX family. In terms of assembly, homodimer.

The protein resides in the cytoplasm. The enzyme catalyses L-homoserine + succinyl-CoA = O-succinyl-L-homoserine + CoA. The protein operates within amino-acid biosynthesis; L-methionine biosynthesis via de novo pathway; O-succinyl-L-homoserine from L-homoserine: step 1/1. In terms of biological role, transfers a succinyl group from succinyl-CoA to L-homoserine, forming succinyl-L-homoserine. In Pseudomonas putida (strain W619), this protein is Homoserine O-succinyltransferase.